A 190-amino-acid chain; its full sequence is Holliday junction branch migration complex subunit RuvA (190 aa).

The tract at residues 1–64 (MIGKLSGTLD…EDAQILYGFA (64 aa)) is domain I. A domain II region spans residues 65–137 (TSQERAAFRE…LKGKLGPDIG (73 aa)). The segment at 137–141 (GVAAS) is flexible linker. The segment at 142–190 (VANDSQADILQALLALGYSDKEAAAALKALPSDVGVSEGIRLALRALGK) is domain III.

This sequence belongs to the RuvA family. Homotetramer. Forms an RuvA(8)-RuvB(12)-Holliday junction (HJ) complex. HJ DNA is sandwiched between 2 RuvA tetramers; dsDNA enters through RuvA and exits via RuvB. An RuvB hexamer assembles on each DNA strand where it exits the tetramer. Each RuvB hexamer is contacted by two RuvA subunits (via domain III) on 2 adjacent RuvB subunits; this complex drives branch migration. In the full resolvosome a probable DNA-RuvA(4)-RuvB(12)-RuvC(2) complex forms which resolves the HJ.

Its subcellular location is the cytoplasm. In terms of biological role, the RuvA-RuvB-RuvC complex processes Holliday junction (HJ) DNA during genetic recombination and DNA repair, while the RuvA-RuvB complex plays an important role in the rescue of blocked DNA replication forks via replication fork reversal (RFR). RuvA specifically binds to HJ cruciform DNA, conferring on it an open structure. The RuvB hexamer acts as an ATP-dependent pump, pulling dsDNA into and through the RuvAB complex. HJ branch migration allows RuvC to scan DNA until it finds its consensus sequence, where it cleaves and resolves the cruciform DNA. The chain is Holliday junction branch migration complex subunit RuvA from Albidiferax ferrireducens (strain ATCC BAA-621 / DSM 15236 / T118) (Rhodoferax ferrireducens).